The following is a 51-amino-acid chain: MASHKTFRIKRFLAKKQKQNRPIPQWIQMKTGNKIMYNSKRRHWRRTKLGL.

It belongs to the eukaryotic ribosomal protein eL39 family. Component of a male germ cell-specific 60S large ribosomal subunit (LSU), which contains RPL10L and RPL39L, instead of RPL10 and RPL39 paralogs. The composition of the rest of the complex is similar to classical ribosomes. As to expression, highly expressed in spermatocytes and spermatids. Highly expressed in embryonic stem cells.

The protein resides in the cytoplasm. Its function is as follows. Male germ cell-specific component of the ribosome, which is required for the formation of sperm and male fertility. Replaces the RPL39 paralog in the ribosome of male germ cells. The ribosome is a large ribonucleoprotein complex responsible for the synthesis of proteins in the cell. The male germ cell-specific ribosome displays a ribosomal polypeptide exit tunnel of distinct size and charge states compared with the classical ribosome. It is responsible for regulating the biosynthesis and folding of a subset of male germ-cell-specific proteins that are essential for the formation of sperm. This Mus musculus (Mouse) protein is Large ribosomal subunit protein eL39-like.